Consider the following 1331-residue polypeptide: uncharacterized protein (1331 aa).

Transmembrane regions (helical) follow at residues 373–393 (VIGV…SLIV), 487–507 (ALFL…LILI), 534–554 (LLIF…SFGI), 579–599 (VVGL…ISLL), 653–673 (LVFL…SFAT), 1206–1226 (VIAV…TTLI), 1255–1275 (IPLF…LIAL), and 1297–1317 (AIGS…LNWL).

The protein belongs to the ABC-4 integral membrane protein family.

It is found in the cell membrane. This is an uncharacterized protein from Mycoplasma genitalium (strain ATCC 33530 / DSM 19775 / NCTC 10195 / G37) (Mycoplasmoides genitalium).